Here is a 333-residue protein sequence, read N- to C-terminus: DNA-directed RNA polymerase subunit alpha (333 aa).

The alpha N-terminal domain (alpha-NTD) stretch occupies residues 1-233 (MVREKVRVST…DLFIPFLHAE (233 aa)). The interval 266-333 (KKEIAFKSIF…DILEIEKHFP (68 aa)) is alpha C-terminal domain (alpha-CTD).

Belongs to the RNA polymerase alpha chain family. In terms of assembly, in plastids the minimal PEP RNA polymerase catalytic core is composed of four subunits: alpha, beta, beta', and beta''. When a (nuclear-encoded) sigma factor is associated with the core the holoenzyme is formed, which can initiate transcription.

It is found in the plastid. The protein resides in the chloroplast. The enzyme catalyses RNA(n) + a ribonucleoside 5'-triphosphate = RNA(n+1) + diphosphate. Its function is as follows. DNA-dependent RNA polymerase catalyzes the transcription of DNA into RNA using the four ribonucleoside triphosphates as substrates. The protein is DNA-directed RNA polymerase subunit alpha of Lotus japonicus (Lotus corniculatus var. japonicus).